Reading from the N-terminus, the 1597-residue chain is Glucosyltransferase-I (1597 aa).

Positions 1-38 (MEKNERFKMHKVKKRWVTISVASATMLASALGASVASA) are cleaved as a signal peptide. The interval 52-120 (LTADQTTTNQ…QTTTNANEAK (69 aa)) is disordered. The segment covering 53 to 114 (TADQTTTNQD…STDTAAQTTT (62 aa)) has biased composition (low complexity). Cell wall-binding repeat units lie at residues 157–176 (MSNV…DGNV) and 178–197 (KNFA…TGAY). A catalytic; approximate region spans residues 200–1050 (TSKVEADKSG…DQASNKYLNV (851 aa)). Cell wall-binding repeat units follow at residues 1089-1108 (TDSF…DGYM), 1109-1128 (VTGA…NGAA), 1130-1150 (RNTV…DGKR), 1152-1172 (ENGY…GVMA), 1173-1191 (LGLT…DGVQ), 1193-1214 (KDKI…NGNA), 1216-1236 (TNTF…DGVA), 1237-1256 (VTGA…NGQQ), 1258-1279 (KGDF…SGDM), 1281-1301 (TNTF…DGAA), 1302-1321 (VTGA…NGQQ), 1323-1343 (KGDI…QTGE), 1344-1365 (QVFN…DGTA), 1366-1380 (QTQA…KDGS), 1415-1434 (LTGA…NGHQ), 1436-1457 (KGQL…SGDQ), 1459-1478 (FNKS…DGTA), 1485-1505 (KGQT…EGQY), 1508-1527 (GSGW…DGKV), 1528-1547 (LTGL…NGIQ), 1549-1570 (KGKA…SGSM), and 1572-1591 (TNQW…DGAA). The glucan-binding; approximate stretch occupies residues 1099–1597 (LYYFGQDGYM…DGAAVYRGWN (499 aa)).

The protein belongs to the glycosyl hydrolase 70 family.

The protein resides in the secreted. It catalyses the reaction [(1-&gt;6)-alpha-D-glucosyl](n) + sucrose = [(1-&gt;6)-alpha-D-glucosyl](n+1) + D-fructose. Its function is as follows. Production of extracellular glucans, that are thought to play a key role in the development of the dental plaque because of their ability to adhere to smooth surfaces and mediate the aggregation of bacterial cells and food debris. In Streptococcus downei (Streptococcus sobrinus), this protein is Glucosyltransferase-I (gtfI).